The following is a 160-amino-acid chain: Protein FrzA (160 aa).

A CheW-like domain is found at 14–155 (EQEFFCFRVG…FSKLLQTARQ (142 aa)).

Its function is as follows. Necessary for proper aggregation of cells to form fruiting bodies. FRZ genes define a system of signal transduction analogous to the enterobacterial chemotaxis systems. In Myxococcus xanthus, this protein is Protein FrzA (frzA).